A 547-amino-acid polypeptide reads, in one-letter code: Methyl-accepting chemotaxis citrate transducer (547 aa).

Residues 1-5 lie on the Cytoplasmic side of the membrane; that stretch reads MKNIK. A helical transmembrane segment spans residues 6 to 29; that stretch reads VITGVIATLGIFSALLLVTGILFY. At 30–189 the chain is on the periplasmic side; that stretch reads SAVSSDRLNF…ASDQNQSSFT (160 aa). The chain crosses the membrane as a helical span at residues 190 to 213; the sequence is QMQWTLGIILLIVLIVLAFIWLGL. At 214 to 547 the chain is on the cytoplasmic side; sequence QRVLLRPLQR…AAEQANWESF (334 aa). Residues 215–267 enclose the HAMP domain; the sequence is RVLLRPLQRIMAHIQTIADGDLTHEIEAEGRSEMGQLAAGLKTMQQSLIRTVS. The Methyl-accepting transducer domain occupies 272–501; sequence NADSIYTGAG…ESAAAAAALE (230 aa). Gln296 carries the post-translational modification Glutamate methyl ester (Gln). Glu303 carries the post-translational modification Glutamate methyl ester (Glu). Gln310 is subject to Glutamate methyl ester (Gln). The segment at 317–336 is disordered; the sequence is QNTDNARQATGLAKTASETA. 2 positions are modified to glutamate methyl ester (Glu): Glu492 and Glu501. Residues 518–547 are disordered; that stretch reads KQPRREASPTTLSKGLTPQPAAEQANWESF.

It belongs to the methyl-accepting chemotaxis (MCP) protein family. Methylation level is increased by citrate and decreased by phenol.

Its subcellular location is the cell inner membrane. Acts as a receptor for citrate and mediates taxis away from phenol. Also mediates an attractant response to metal-citrate complexes. The sequence is that of Methyl-accepting chemotaxis citrate transducer (tcp) from Salmonella typhimurium (strain LT2 / SGSC1412 / ATCC 700720).